The chain runs to 336 residues: Ketoreductase adrE (336 aa).

Position 171 (Tyr-171) interacts with NADP(+).

The protein belongs to the NAD(P)-dependent epimerase/dehydratase family. Dihydroflavonol-4-reductase subfamily.

Its pathway is secondary metabolite biosynthesis; terpenoid biosynthesis. Its function is as follows. Ketoreductase; part of the gene cluster that mediates the biosynthesis of andrastins, meroterpenoid compounds that exhibit inhibitory activity against ras farnesyltransferase, suggesting that they could be promising leads for antitumor agents. The first step of the pathway is the synthesis of 3,5-dimethylorsellinic acid (DMOA) by the polyketide synthase adrD via condensation of one acetyl-CoA starter unit with 3 malonyl-CoA units and 2 methylations. DMAO is then converted to farnesyl-DMAO by the prenyltransferase adrG. The methyltransferase adrK catalyzes the methylation of the carboxyl group of farnesyl-DMAO to farnesyl-DMAO methyl ester which is further converted to epoxyfarnesyl-DMAO methyl ester by the FAD-dependent monooxygenase adrH. The terpene cyclase adrI then catalyzes the carbon skeletal rearrangement to generate the andrastin E, the first compound in the pathway having the andrastin scaffold, with the tetracyclic ring system. The post-cyclization tailoring enzymes adrF, adrE, adrJ, and adrA, are involved in the conversion of andrastin E into andrastin A. The short chain dehydrogenase adrF is responsible for the oxidation of the C-3 a hydroxyl group of andrastin E to yield the corresponding ketone, andrastin D. The ketoreductase adrE stereoselectively reduces the carbonyl moiety to reverse the stereochemistry of the C-3 position to yield andrastin F. The acetyltransferase adrJ is the acetyltransferase that attaches the acetyl group to the C-3 hydroxyl group of andrastin F to yield andrastin C. Finally, the cytochrome P450 monooxygenase adrA catalyzes two sequential oxidation reactions of the C-23 methyl group, to generate the corresponding alcohol andrastin B, and aldehyde andrastin A. The polypeptide is Ketoreductase adrE (Penicillium roqueforti).